The primary structure comprises 278 residues: Bifunctional protein FolD (278 aa).

Residues 163–165 (GRS), serine 188, and valine 229 each bind NADP(+).

Belongs to the tetrahydrofolate dehydrogenase/cyclohydrolase family. In terms of assembly, homodimer.

It carries out the reaction (6R)-5,10-methylene-5,6,7,8-tetrahydrofolate + NADP(+) = (6R)-5,10-methenyltetrahydrofolate + NADPH. The enzyme catalyses (6R)-5,10-methenyltetrahydrofolate + H2O = (6R)-10-formyltetrahydrofolate + H(+). It participates in one-carbon metabolism; tetrahydrofolate interconversion. In terms of biological role, catalyzes the oxidation of 5,10-methylenetetrahydrofolate to 5,10-methenyltetrahydrofolate and then the hydrolysis of 5,10-methenyltetrahydrofolate to 10-formyltetrahydrofolate. This Exiguobacterium sp. (strain ATCC BAA-1283 / AT1b) protein is Bifunctional protein FolD.